Here is a 517-residue protein sequence, read N- to C-terminus: Probable bifunctional methylthioribulose-1-phosphate dehydratase/enolase-phosphatase E1 1 (517 aa).

The methylthioribulose-1-phosphate dehydratase stretch occupies residues 1-240; the sequence is MAAAALNGLK…AIKLYQLGLD (240 aa). Cys-112 serves as a coordination point for substrate. The Zn(2+) site is built by His-130 and His-132. The active-site Proton donor/acceptor; for methylthioribulose-1-phosphate dehydratase activity is the Glu-155. His-205 contacts Zn(2+). Residues 278–517 form an enolase-phosphatase E1 region; it reads IVLDIEGTTT…FKTITSFSDI (240 aa). Positions 281 and 283 each coordinate Mg(2+). Substrate is bound by residues 416–417 and Lys-450; that span reads SS. Asp-476 serves as a coordination point for Mg(2+).

The protein in the N-terminal section; belongs to the aldolase class II family. MtnB subfamily. In the C-terminal section; belongs to the HAD-like hydrolase superfamily. MasA/MtnC family. It depends on Zn(2+) as a cofactor. Mg(2+) is required as a cofactor.

The catalysed reaction is 5-(methylsulfanyl)-D-ribulose 1-phosphate = 5-methylsulfanyl-2,3-dioxopentyl phosphate + H2O. It catalyses the reaction 5-methylsulfanyl-2,3-dioxopentyl phosphate + H2O = 1,2-dihydroxy-5-(methylsulfanyl)pent-1-en-3-one + phosphate. It functions in the pathway amino-acid biosynthesis; L-methionine biosynthesis via salvage pathway; L-methionine from S-methyl-5-thio-alpha-D-ribose 1-phosphate: step 2/6. The protein operates within amino-acid biosynthesis; L-methionine biosynthesis via salvage pathway; L-methionine from S-methyl-5-thio-alpha-D-ribose 1-phosphate: step 3/6. Its pathway is amino-acid biosynthesis; L-methionine biosynthesis via salvage pathway; L-methionine from S-methyl-5-thio-alpha-D-ribose 1-phosphate: step 4/6. This is Probable bifunctional methylthioribulose-1-phosphate dehydratase/enolase-phosphatase E1 1 from Vitis vinifera (Grape).